The chain runs to 663 residues: Translation factor GUF1, mitochondrial (663 aa).

The N-terminal 37 residues, 1 to 37 (MRGCLQSVRLLTTALGQSPRRPLPFAFRLPPNASRLF), are a transit peptide targeting the mitochondrion. Residues 65–245 (ERYRNFCIVA…TIVEQIPAPI (181 aa)) form the tr-type G domain. GTP-binding positions include 74–81 (AHVDHGKS), 138–142 (DTPGH), and 192–195 (NKVD).

This sequence belongs to the TRAFAC class translation factor GTPase superfamily. Classic translation factor GTPase family. LepA subfamily.

It localises to the mitochondrion inner membrane. The catalysed reaction is GTP + H2O = GDP + phosphate + H(+). Its function is as follows. Promotes mitochondrial protein synthesis. May act as a fidelity factor of the translation reaction, by catalyzing a one-codon backward translocation of tRNAs on improperly translocated ribosomes. Binds to mitochondrial ribosomes in a GTP-dependent manner. This chain is Translation factor GUF1, mitochondrial, found in Uncinocarpus reesii (strain UAMH 1704).